A 368-amino-acid chain; its full sequence is Protein RecA (368 aa).

80-87 (GPESSGKT) contacts ATP. A compositionally biased stretch (polar residues) spans 344-353 (NPTFTATPDS). Residues 344 to 368 (NPTFTATPDSENADNADDEFSEEEL) are disordered. The span at 354–368 (ENADNADDEFSEEEL) shows a compositional bias: acidic residues.

It belongs to the RecA family.

The protein resides in the cytoplasm. In terms of biological role, can catalyze the hydrolysis of ATP in the presence of single-stranded DNA, the ATP-dependent uptake of single-stranded DNA by duplex DNA, and the ATP-dependent hybridization of homologous single-stranded DNAs. It interacts with LexA causing its activation and leading to its autocatalytic cleavage. The protein is Protein RecA of Mannheimia haemolytica (Pasteurella haemolytica).